The primary structure comprises 226 residues: MNPIVINRLQRKLGYTFHHQELLQQALTHRSASSKHNERLEFLGDSILSFVIANALYHRFPRVDEGDMSRMRATLVRGNTLAEIAREFELGECLRLGPGELKSGGFRRESILADTVEALIGGVFLDSDIQNVERLILSWYQTRLDEISPGDKQKDPKTRLQEYLQGRHLPLPSYLVVQVRGEAHDQEFTIHCQVSGLSEPVVGTGSSRRKAEQAAAEQALKKLELE.

The 123-residue stretch at 6 to 128 folds into the RNase III domain; it reads INRLQRKLGY…LIGGVFLDSD (123 aa). Position 41 (Glu-41) interacts with Mg(2+). The active site involves Asp-45. 2 residues coordinate Mg(2+): Asp-114 and Glu-117. Glu-117 is a catalytic residue. Positions 155–225 constitute a DRBM domain; that stretch reads DPKTRLQEYL…AEQALKKLEL (71 aa).

Belongs to the ribonuclease III family. In terms of assembly, homodimer. Requires Mg(2+) as cofactor.

It is found in the cytoplasm. It carries out the reaction Endonucleolytic cleavage to 5'-phosphomonoester.. Functionally, digests double-stranded RNA. Involved in the processing of primary rRNA transcript to yield the immediate precursors to the large and small rRNAs (23S and 16S). Processes some mRNAs, and tRNAs when they are encoded in the rRNA operon. Processes pre-crRNA and tracrRNA of type II CRISPR loci if present in the organism. This chain is Ribonuclease 3, found in Klebsiella pneumoniae (strain 342).